A 291-amino-acid polypeptide reads, in one-letter code: Lipoyl synthase (291 aa).

[4Fe-4S] cluster contacts are provided by cysteine 33, cysteine 38, cysteine 44, cysteine 59, cysteine 63, cysteine 66, and serine 274. In terms of domain architecture, Radical SAM core spans 45–263; it reads WGEGTATFLI…REAAEAMGFK (219 aa).

Belongs to the radical SAM superfamily. Lipoyl synthase family. Requires [4Fe-4S] cluster as cofactor.

It is found in the cytoplasm. It catalyses the reaction [[Fe-S] cluster scaffold protein carrying a second [4Fe-4S](2+) cluster] + N(6)-octanoyl-L-lysyl-[protein] + 2 oxidized [2Fe-2S]-[ferredoxin] + 2 S-adenosyl-L-methionine + 4 H(+) = [[Fe-S] cluster scaffold protein] + N(6)-[(R)-dihydrolipoyl]-L-lysyl-[protein] + 4 Fe(3+) + 2 hydrogen sulfide + 2 5'-deoxyadenosine + 2 L-methionine + 2 reduced [2Fe-2S]-[ferredoxin]. It participates in protein modification; protein lipoylation via endogenous pathway; protein N(6)-(lipoyl)lysine from octanoyl-[acyl-carrier-protein]: step 2/2. Its function is as follows. Catalyzes the radical-mediated insertion of two sulfur atoms into the C-6 and C-8 positions of the octanoyl moiety bound to the lipoyl domains of lipoate-dependent enzymes, thereby converting the octanoylated domains into lipoylated derivatives. The sequence is that of Lipoyl synthase from Pyrobaculum calidifontis (strain DSM 21063 / JCM 11548 / VA1).